Here is a 191-residue protein sequence, read N- to C-terminus: Transcription factor E (191 aa).

In terms of domain architecture, HTH TFE/IIEalpha-type spans 4-87 (RNKELLEIGR…YWHIETKRLP (84 aa)). Residues 170–191 (APPKKEKKGKKSKKRSKKSKKK) form a disordered region. Positions 174–191 (KEKKGKKSKKRSKKSKKK) are enriched in basic residues.

The protein belongs to the TFE family. As to quaternary structure, monomer. Interaction with RNA polymerase subunits RpoF and RpoE is necessary for Tfe stimulatory transcription activity. Able to interact with Tbp and RNA polymerase in the absence of DNA promoter. Interacts both with the preinitiation and elongation complexes.

Functionally, transcription factor that plays a role in the activation of archaeal genes transcribed by RNA polymerase. Facilitates transcription initiation by enhancing TATA-box recognition by TATA-box-binding protein (Tbp), and transcription factor B (Tfb) and RNA polymerase recruitment. Not absolutely required for transcription in vitro, but particularly important in cases where Tbp or Tfb function is not optimal. It dynamically alters the nucleic acid-binding properties of RNA polymerases by stabilizing the initiation complex and destabilizing elongation complexes. Seems to translocate with the RNA polymerase following initiation and acts by binding to the non template strand of the transcription bubble in elongation complexes. The chain is Transcription factor E from Pyrococcus horikoshii (strain ATCC 700860 / DSM 12428 / JCM 9974 / NBRC 100139 / OT-3).